Here is a 328-residue protein sequence, read N- to C-terminus: N-acetyl-gamma-glutamyl-phosphate reductase (328 aa).

Residue Cys-143 is part of the active site.

Belongs to the NAGSA dehydrogenase family. Type 1 subfamily.

Its subcellular location is the cytoplasm. It catalyses the reaction N-acetyl-L-glutamate 5-semialdehyde + phosphate + NADP(+) = N-acetyl-L-glutamyl 5-phosphate + NADPH + H(+). The protein operates within amino-acid biosynthesis; L-arginine biosynthesis; N(2)-acetyl-L-ornithine from L-glutamate: step 3/4. In terms of biological role, catalyzes the NADPH-dependent reduction of N-acetyl-5-glutamyl phosphate to yield N-acetyl-L-glutamate 5-semialdehyde. The chain is N-acetyl-gamma-glutamyl-phosphate reductase from Methanosphaerula palustris (strain ATCC BAA-1556 / DSM 19958 / E1-9c).